A 100-amino-acid polypeptide reads, in one-letter code: Small ribosomal subunit protein uS14c (100 aa).

This sequence belongs to the universal ribosomal protein uS14 family. In terms of assembly, part of the 30S ribosomal subunit.

It is found in the plastid. Its subcellular location is the chloroplast. Its function is as follows. Binds 16S rRNA, required for the assembly of 30S particles. The polypeptide is Small ribosomal subunit protein uS14c (Guillardia theta (Cryptophyte)).